A 132-amino-acid chain; its full sequence is uncharacterized protein (132 aa).

The protein to M.jannaschii MJ0661.

This is an uncharacterized protein from Helicobacter pylori (strain J99 / ATCC 700824) (Campylobacter pylori J99).